Reading from the N-terminus, the 255-residue chain is 4-diphosphocytidyl-2-C-methyl-D-erythritol kinase (255 aa).

The active site involves Lys-6. 95–105 (PVCAGLGGGSS) serves as a coordination point for ATP. The active site involves Asp-137.

This sequence belongs to the GHMP kinase family. IspE subfamily.

It catalyses the reaction 4-CDP-2-C-methyl-D-erythritol + ATP = 4-CDP-2-C-methyl-D-erythritol 2-phosphate + ADP + H(+). Its pathway is isoprenoid biosynthesis; isopentenyl diphosphate biosynthesis via DXP pathway; isopentenyl diphosphate from 1-deoxy-D-xylulose 5-phosphate: step 3/6. Catalyzes the phosphorylation of the position 2 hydroxy group of 4-diphosphocytidyl-2C-methyl-D-erythritol. This chain is 4-diphosphocytidyl-2-C-methyl-D-erythritol kinase, found in Campylobacter jejuni subsp. jejuni serotype O:23/36 (strain 81-176).